Here is a 293-residue protein sequence, read N- to C-terminus: MKISITAPAKINLSLDALYKREDGYHEVEMVMTTIDLADRLYLERLDEDKIVLDVKAHFIPEDRRNLIYQAALLLKKRFDVKMGVRITIDKHIPVSAGLAGGSSDAAAALKGLNVIWELGLSIEELAEISSEIGSDIAFCVYGGTALATGRGEKISALPNIPGCWIVLAKPSISVSTPTIYKELQVDNVEHPDTQKMIESIKNGDLDGIFASTGNVLESVTLEKNPQVKRIKDRMLAFGAEAALMSGSGPTVFALIKQYSRAKRVYNGLRGFCEEVYMVRPWSEGENDTNINN.

The active site involves Lys10. 94 to 104 (PVSAGLAGGSS) contacts ATP. Residue Asp136 is part of the active site.

The protein belongs to the GHMP kinase family. IspE subfamily.

It carries out the reaction 4-CDP-2-C-methyl-D-erythritol + ATP = 4-CDP-2-C-methyl-D-erythritol 2-phosphate + ADP + H(+). The protein operates within isoprenoid biosynthesis; isopentenyl diphosphate biosynthesis via DXP pathway; isopentenyl diphosphate from 1-deoxy-D-xylulose 5-phosphate: step 3/6. Catalyzes the phosphorylation of the position 2 hydroxy group of 4-diphosphocytidyl-2C-methyl-D-erythritol. The chain is 4-diphosphocytidyl-2-C-methyl-D-erythritol kinase from Listeria monocytogenes serotype 4b (strain CLIP80459).